The primary structure comprises 306 residues: Acetyl-coenzyme A carboxylase carboxyl transferase subunit beta (306 aa).

A CoA carboxyltransferase N-terminal domain is found at 27–296 (LWHKCPSCEA…PRFVAPVIEP (270 aa)). Zn(2+) is bound by residues cysteine 31, cysteine 34, cysteine 50, and cysteine 53. The C4-type zinc finger occupies 31 to 53 (CPSCEAVLYRPELEKTLDVCPKC).

The protein belongs to the AccD/PCCB family. In terms of assembly, acetyl-CoA carboxylase is a heterohexamer composed of biotin carboxyl carrier protein (AccB), biotin carboxylase (AccC) and two subunits each of ACCase subunit alpha (AccA) and ACCase subunit beta (AccD). Requires Zn(2+) as cofactor.

The protein localises to the cytoplasm. The enzyme catalyses N(6)-carboxybiotinyl-L-lysyl-[protein] + acetyl-CoA = N(6)-biotinyl-L-lysyl-[protein] + malonyl-CoA. Its pathway is lipid metabolism; malonyl-CoA biosynthesis; malonyl-CoA from acetyl-CoA: step 1/1. Functionally, component of the acetyl coenzyme A carboxylase (ACC) complex. Biotin carboxylase (BC) catalyzes the carboxylation of biotin on its carrier protein (BCCP) and then the CO(2) group is transferred by the transcarboxylase to acetyl-CoA to form malonyl-CoA. This chain is Acetyl-coenzyme A carboxylase carboxyl transferase subunit beta, found in Pseudomonas savastanoi pv. phaseolicola (strain 1448A / Race 6) (Pseudomonas syringae pv. phaseolicola (strain 1448A / Race 6)).